The chain runs to 155 residues: Ribonuclease H (155 aa).

The RNase H type-1 domain maps to 1 to 142; it reads MLKQVEIFTD…CDELARNAAG (142 aa). Aspartate 10, glutamate 48, aspartate 70, and aspartate 134 together coordinate Mg(2+).

It belongs to the RNase H family. As to quaternary structure, monomer. Requires Mg(2+) as cofactor.

The protein resides in the cytoplasm. The catalysed reaction is Endonucleolytic cleavage to 5'-phosphomonoester.. In terms of biological role, endonuclease that specifically degrades the RNA of RNA-DNA hybrids. The protein is Ribonuclease H of Erwinia tasmaniensis (strain DSM 17950 / CFBP 7177 / CIP 109463 / NCPPB 4357 / Et1/99).